We begin with the raw amino-acid sequence, 149 residues long: 3-hydroxyacyl-[acyl-carrier-protein] dehydratase FabZ (149 aa).

The active site involves His52.

It belongs to the thioester dehydratase family. FabZ subfamily.

The protein resides in the cytoplasm. The enzyme catalyses a (3R)-hydroxyacyl-[ACP] = a (2E)-enoyl-[ACP] + H2O. Functionally, involved in unsaturated fatty acids biosynthesis. Catalyzes the dehydration of short chain beta-hydroxyacyl-ACPs and long chain saturated and unsaturated beta-hydroxyacyl-ACPs. The chain is 3-hydroxyacyl-[acyl-carrier-protein] dehydratase FabZ from Cupriavidus necator (strain ATCC 17699 / DSM 428 / KCTC 22496 / NCIMB 10442 / H16 / Stanier 337) (Ralstonia eutropha).